The chain runs to 249 residues: Chitooligosaccharide deacetylase (249 aa).

His61 and His125 together coordinate Mg(2+).

This sequence belongs to the YdjC deacetylase family. ChbG subfamily. Homodimer. Mg(2+) serves as cofactor.

The protein localises to the cytoplasm. It carries out the reaction N,N'-diacetylchitobiose + H2O = N-acetyl-beta-D-glucosaminyl-(1-&gt;4)-D-glucosamine + acetate. It catalyses the reaction diacetylchitobiose-6'-phosphate + H2O = N'-monoacetylchitobiose-6'-phosphate + acetate. It functions in the pathway glycan degradation; chitin degradation. Involved in the degradation of chitin. ChbG is essential for growth on the acetylated chitooligosaccharides chitobiose and chitotriose but is dispensable for growth on cellobiose and chitosan dimer, the deacetylated form of chitobiose. Deacetylation of chitobiose-6-P and chitotriose-6-P is necessary for both the activation of the chb promoter by the regulatory protein ChbR and the hydrolysis of phosphorylated beta-glucosides by the phospho-beta-glucosidase ChbF. Catalyzes the removal of only one acetyl group from chitobiose-6-P to yield monoacetylchitobiose-6-P, the inducer of ChbR and the substrate of ChbF. The chain is Chitooligosaccharide deacetylase from Escherichia coli O9:H4 (strain HS).